Here is a 641-residue protein sequence, read N- to C-terminus: Macrolide export ATP-binding/permease protein MacB (641 aa).

The 235-residue stretch at 2 to 236 folds into the ABC transporter domain; the sequence is IFLKNICKNI…LILKTMPKEK (235 aa). 34-41 contributes to the ATP binding site; sequence GQSGSGKT. A run of 4 helical transmembrane segments spans residues 265-285, 519-539, 571-591, and 604-624; these read ILTM…VALG, ACVA…IMLV, MICT…IFAF, and AYSV…FGFF.

The protein belongs to the ABC transporter superfamily. Macrolide exporter (TC 3.A.1.122) family. In terms of assembly, homodimer.

Its subcellular location is the cell inner membrane. Functionally, non-canonical ABC transporter that contains transmembrane domains (TMD), which form a pore in the inner membrane, and an ATP-binding domain (NBD), which is responsible for energy generation. Confers resistance against macrolides. The chain is Macrolide export ATP-binding/permease protein MacB from Campylobacter jejuni subsp. jejuni serotype O:2 (strain ATCC 700819 / NCTC 11168).